Reading from the N-terminus, the 144-residue chain is Neuritin-A (144 aa).

Positions 1–27 are cleaved as a signal peptide; it reads MGLKLSGRYIFLVLAVHLAYLLQAVKA. Ser-114 carries GPI-anchor amidated serine lipidation. The propeptide at 115-144 is removed in mature form; sequence AGAPGQRLLFPAFLPLLMVFLSTLFILVLQ.

The protein belongs to the neuritin family. As to expression, expressed in sensory regions of the brain including the visual, auditory and olfactory systems. Within the retina, only expressed in the retinal ganglion cells. Concentrated in axon tracts including retinal axons.

The protein localises to the cell membrane. Modulates postsynaptic dendritic arbor elaboration and synaptic maturation. This is Neuritin-A (nrn1-a) from Xenopus laevis (African clawed frog).